Reading from the N-terminus, the 419-residue chain is MLLQASQATQSVWKTLNKWLPPLSRDKDWWWKTLGPQINTLLTEADYDLNERYEALLLLYRWVVPEMGPRPRSSVAPSKSFMTDDHSPIEYSWKWISGNKKPEIRYAVELVSPLAGSKQDPFNQIPTRNLVYNLAKIIPELDLTWFEHFWHELLGPGSPTTSTSGVLTKGSTVFAALEMLHGHLSVKVYFIPVETPDFSAWHQIKHAIEASGCPNLEALNHVDAYLSSHDDGRQLRPFMLAIDLVEPAASRLKIYARSNQTSFRFVRDVMTIGGLRTDLDRSIEKFSDLWKRALGLDPDTPPEDELPKVDHLTSGAVFNFDVAPKSQIPEVKAYIPVRHYANNDLQAALGLIGYLEDHGHGGYSQSYLRGLDMLAPSGQLDQATGVQTYFAVACQGEDLSLTSYLNPQFYAAFQEPERT.

Residues Phe-81, Met-82, and Glu-90 each coordinate L-tryptophan. Residue Phe-81 participates in L-tyrosine binding. Positions 105, 187, 189, 251, 253, and 255 each coordinate (2E)-geranyl diphosphate. Positions 105, 187, 189, 251, 253, and 255 each coordinate dimethylallyl diphosphate. Arg-257 contributes to the L-tryptophan binding site. Arg-257 contributes to the L-tyrosine binding site. The (2E)-geranyl diphosphate site is built by Lys-332 and Tyr-334. Positions 332 and 334 each coordinate dimethylallyl diphosphate. Tyr-389 is an L-tryptophan binding site. Position 389 (Tyr-389) interacts with L-tyrosine. Tyr-404 contacts (2E)-geranyl diphosphate.

This sequence belongs to the tryptophan dimethylallyltransferase family.

The enzyme catalyses L-tyrosine + dimethylallyl diphosphate = 4-O-dimethylallyl-L-tyrosine + diphosphate. Its function is as follows. Dimethylallyltryptophan synthase; part of the DMATS1 gene cluster that mediates the biosynthesis of a reversely N-prenylated monomeric L-tryptophan (r-N-DMAT). DMATS1 catalyzes the reverse N-prenylation of L-Trp with DMAPP to yield N-dimethylallyl-L-tryptophan. DMATS1 exhibits unusually broad substrate specificity and can utilize geranyl diphosphate (GPP) or L-Tyr as an alternative prenyl donor or acceptor, respectively. Is able to catalyze both forward and reverse prenylation, i.e., at C1 or C3 of DMAPP; and it can catalyze C-N and C-O bond-forming reactions. The main product of the cluster is the reverse-N-dimethylallyl-L-tryptophan (r-N-DMAT) produced by the dimethylallyltryptophan synthase DMATS1 and it remains unclear whether this metabolite undergoes further modifications when silent gene clusters are activated. The acetylated form of r-N-DMAT, ac-r-N-DMAT, is also produced. The roles of the cytochrome P450 monooxygenase FFUJ_09176 and the methyltransferase FFUJ_09178 have still to be elucidated. The chain is Dimethylallyltryptophan synthase 1 from Gibberella fujikuroi (strain CBS 195.34 / IMI 58289 / NRRL A-6831) (Bakanae and foot rot disease fungus).